The chain runs to 255 residues: Cytochrome c oxidase subunit 3 (255 aa).

Transmembrane regions (helical) follow at residues 12-29, 57-77, 91-111, 126-146, 155-175, 196-216, and 235-255; these read INII…STGL, LKYL…INGI, IFGM…WGFF, LEAF…ISLI, YFEV…FLSF, FNVL…FALM, and GMYW…LFLL.

This sequence belongs to the cytochrome c oxidase subunit 3 family. In terms of assembly, component of the cytochrome c oxidase (complex IV, CIV), a multisubunit enzyme composed of a catalytic core of 3 subunits and several supernumerary subunits. The complex exists as a monomer or a dimer and forms supercomplexes (SCs) in the inner mitochondrial membrane with ubiquinol-cytochrome c oxidoreductase (cytochrome b-c1 complex, complex III, CIII).

Its subcellular location is the mitochondrion inner membrane. It catalyses the reaction 4 Fe(II)-[cytochrome c] + O2 + 8 H(+)(in) = 4 Fe(III)-[cytochrome c] + 2 H2O + 4 H(+)(out). In terms of biological role, component of the cytochrome c oxidase, the last enzyme in the mitochondrial electron transport chain which drives oxidative phosphorylation. The respiratory chain contains 3 multisubunit complexes succinate dehydrogenase (complex II, CII), ubiquinol-cytochrome c oxidoreductase (cytochrome b-c1 complex, complex III, CIII) and cytochrome c oxidase (complex IV, CIV), that cooperate to transfer electrons derived from NADH and succinate to molecular oxygen, creating an electrochemical gradient over the inner membrane that drives transmembrane transport and the ATP synthase. Cytochrome c oxidase is the component of the respiratory chain that catalyzes the reduction of oxygen to water. Electrons originating from reduced cytochrome c in the intermembrane space (IMS) are transferred via the dinuclear copper A center (CU(A)) of subunit 2 and heme A of subunit 1 to the active site in subunit 1, a binuclear center (BNC) formed by heme A3 and copper B (CU(B)). The BNC reduces molecular oxygen to 2 water molecules using 4 electrons from cytochrome c in the IMS and 4 protons from the mitochondrial matrix. In Theileria annulata, this protein is Cytochrome c oxidase subunit 3 (MT-CO3).